A 188-amino-acid chain; its full sequence is Elongation factor P (188 aa).

Belongs to the elongation factor P family.

It localises to the cytoplasm. The protein operates within protein biosynthesis; polypeptide chain elongation. Functionally, involved in peptide bond synthesis. Stimulates efficient translation and peptide-bond synthesis on native or reconstituted 70S ribosomes in vitro. Probably functions indirectly by altering the affinity of the ribosome for aminoacyl-tRNA, thus increasing their reactivity as acceptors for peptidyl transferase. In Gluconobacter oxydans (strain 621H) (Gluconobacter suboxydans), this protein is Elongation factor P.